A 437-amino-acid polypeptide reads, in one-letter code: Enolase (437 aa).

(2R)-2-phosphoglycerate is bound at residue Gln162. Glu204 (proton donor) is an active-site residue. Mg(2+) contacts are provided by Asp251, Glu297, and Asp324. 4 residues coordinate (2R)-2-phosphoglycerate: Lys349, Arg378, Ser379, and Lys400. The active-site Proton acceptor is the Lys349.

This sequence belongs to the enolase family. Requires Mg(2+) as cofactor.

It localises to the cytoplasm. Its subcellular location is the secreted. The protein localises to the cell surface. It carries out the reaction (2R)-2-phosphoglycerate = phosphoenolpyruvate + H2O. Its pathway is carbohydrate degradation; glycolysis; pyruvate from D-glyceraldehyde 3-phosphate: step 4/5. Its function is as follows. Catalyzes the reversible conversion of 2-phosphoglycerate (2-PG) into phosphoenolpyruvate (PEP). It is essential for the degradation of carbohydrates via glycolysis. The protein is Enolase of Prosthecochloris aestuarii (strain DSM 271 / SK 413).